The sequence spans 211 residues: tRNA (guanine-N(7)-)-methyltransferase (211 aa).

Residues glutamate 44, aspartate 69, aspartate 96, and aspartate 118 each contribute to the S-adenosyl-L-methionine site. The active site involves aspartate 118. Lysine 122 serves as a coordination point for substrate. The interaction with RNA stretch occupies residues 124 to 129 (RHEKRR). Substrate is bound by residues aspartate 154 and 191–194 (TEYE).

The protein belongs to the class I-like SAM-binding methyltransferase superfamily. TrmB family.

The enzyme catalyses guanosine(46) in tRNA + S-adenosyl-L-methionine = N(7)-methylguanosine(46) in tRNA + S-adenosyl-L-homocysteine. It functions in the pathway tRNA modification; N(7)-methylguanine-tRNA biosynthesis. Catalyzes the formation of N(7)-methylguanine at position 46 (m7G46) in tRNA. This is tRNA (guanine-N(7)-)-methyltransferase from Streptococcus equi subsp. equi (strain 4047).